Reading from the N-terminus, the 1097-residue chain is RecBCD enzyme subunit RecC (1097 aa).

This sequence belongs to the RecC family. In terms of assembly, heterotrimer of RecB, RecC and RecD. All subunits contribute to DNA-binding.

Functionally, a helicase/nuclease that prepares dsDNA breaks (DSB) for recombinational DNA repair. Binds to DSBs and unwinds DNA via a highly rapid and processive ATP-dependent bidirectional helicase activity. Holoenzyme degrades any linearized DNA that is unable to undergo homologous recombination. In the holoenzyme this subunit recognizes the wild-type Chi sequence, and when added to isolated RecB increases its ATP-dependent helicase processivity. Unlike the case in E.coli, suppresses RecA-dependent homologous recombination, is instead required for single-strand annealing pathway repair of DSB. The chain is RecBCD enzyme subunit RecC from Mycobacterium tuberculosis (strain CDC 1551 / Oshkosh).